Reading from the N-terminus, the 146-residue chain is Hemoglobin subunit beta (146 aa).

The region spanning 2–146 (HWSAEEKQLI…VAHSLARVYH (145 aa)) is the Globin domain. Heme b-binding residues include His-63 and His-92.

It belongs to the globin family. In terms of assembly, heterotetramer of two alpha chains and two beta chains. As to expression, red blood cells.

Functionally, involved in oxygen transport from the lung to the various peripheral tissues. The polypeptide is Hemoglobin subunit beta (HBB) (Microcephalophis gracilis (Graceful small-headed sea snake)).